The chain runs to 425 residues: Serine--tRNA ligase (425 aa).

231–233 (TAE) contacts L-serine. ATP is bound at residue 262-264 (RSE). Glu285 provides a ligand contact to L-serine. ATP is bound at residue 349–352 (EISS). Ser385 is a binding site for L-serine.

The protein belongs to the class-II aminoacyl-tRNA synthetase family. Type-1 seryl-tRNA synthetase subfamily. In terms of assembly, homodimer. The tRNA molecule binds across the dimer.

Its subcellular location is the cytoplasm. The enzyme catalyses tRNA(Ser) + L-serine + ATP = L-seryl-tRNA(Ser) + AMP + diphosphate + H(+). It carries out the reaction tRNA(Sec) + L-serine + ATP = L-seryl-tRNA(Sec) + AMP + diphosphate + H(+). The protein operates within aminoacyl-tRNA biosynthesis; selenocysteinyl-tRNA(Sec) biosynthesis; L-seryl-tRNA(Sec) from L-serine and tRNA(Sec): step 1/1. Functionally, catalyzes the attachment of serine to tRNA(Ser). Is also able to aminoacylate tRNA(Sec) with serine, to form the misacylated tRNA L-seryl-tRNA(Sec), which will be further converted into selenocysteinyl-tRNA(Sec). The sequence is that of Serine--tRNA ligase from Halalkalibacterium halodurans (strain ATCC BAA-125 / DSM 18197 / FERM 7344 / JCM 9153 / C-125) (Bacillus halodurans).